An 872-amino-acid chain; its full sequence is Exoglucanase A (872 aa).

A signal peptide spans 1 to 40 (MSTLGKRAGVRRRVRAVATAATATALVAVPLTTLATSASA). A catalytic region spans residues 41–477 (APVHVDNPYA…PVIGGTTPVE (437 aa)). 2 disulfides stabilise this stretch: Cys-140–Cys-202 and Cys-374–Cys-428. Asp-188 acts as the Proton donor in catalysis. The active-site Nucleophile is the Asp-410. Fibronectin type-III domains follow at residues 484–569 (VPTG…TQSG), 579–667 (VPAG…TQTG), and 677–765 (VPTG…TQAA). Residues 763-872 (QAATSGGCTV…TLNGVACTLG (110 aa)) enclose the CBM2 domain. Cys-770 and Cys-869 form a disulfide bridge.

It belongs to the glycosyl hydrolase 6 (cellulase B) family.

It carries out the reaction Hydrolysis of (1-&gt;4)-beta-D-glucosidic linkages in cellulose and cellotetraose, releasing cellobiose from the non-reducing ends of the chains.. This enzyme hydrolyzes 1,4-beta-D-glucosidic linkages of cellulose. Weak activity against carboxymethylcellulose, bacterial microcrystalline cellulose and barley beta-glucan. Also has weak endoglucanase activity. Hydrolyzes glucosidic bonds with inversion of anomeric configuration. This Cellulomonas fimi (strain ATCC 484 / DSM 20113 / JCM 1341 / CCUG 24087 / LMG 16345 / NBRC 15513 / NCIMB 8980 / NCTC 7547 / NRS-133) protein is Exoglucanase A (cbhA).